Here is a 336-residue protein sequence, read N- to C-terminus: Fructose-1,6-bisphosphatase class 1 (336 aa).

The Mg(2+) site is built by E90, D112, L114, and D115. Substrate contacts are provided by residues 115–118, N211, and K277; that span reads DGSS. Mg(2+) is bound at residue E283.

Belongs to the FBPase class 1 family. As to quaternary structure, homotetramer. Mg(2+) serves as cofactor.

It localises to the cytoplasm. The catalysed reaction is beta-D-fructose 1,6-bisphosphate + H2O = beta-D-fructose 6-phosphate + phosphate. It functions in the pathway carbohydrate biosynthesis; gluconeogenesis. In Pseudomonas syringae pv. syringae (strain B728a), this protein is Fructose-1,6-bisphosphatase class 1.